Here is a 374-residue protein sequence, read N- to C-terminus: SH2 domain-containing protein 2A (374 aa).

An SH2 domain is found at 116–207 (WFHGFITRRE…PYGEILTQPL (92 aa)). The interval 213–232 (EPAGLSLRADSDSGSKRQDP) is disordered. Basic and acidic residues predominate over residues 221–232 (ADSDSGSKRQDP). Ser-237 carries the post-translational modification Phosphoserine. Residues 241–301 (QQGQAQASGH…QAPPINPIYQ (61 aa)) form a disordered region. Residues 256-266 (ASQQKATSQAS) show a composition bias toward polar residues. Residues 267–273 (RPRPPIP) carry the SH3-binding motif. Over residues 268–279 (PRPPIPAKPQLP) the composition is skewed to pro residues. A Phosphoserine modification is found at Ser-316. Disordered regions lie at residues 321–340 (PSNI…IGHP) and 353–374 (GQVR…GSPS).

As to quaternary structure, interacts with KDR. Interacts with p56-LCK, TXK and ITK. Phosphorylated on tyrosine residues upon TCR-stimulation. Expression limited to tissues of the immune system and, in particular, activated T-cells and natural killer cells. Expressed in the thymus, lymph node, and to a lesser extent, in the spleen and bone marrow. According to PubMed:10553045, also expressed in the lung.

The protein localises to the cytoplasm. The protein resides in the cell membrane. Could be a T-cell-specific adapter protein involved in the control of T-cell activation. May play a role in p56-LCK-mediated T-cell signaling. Could be involved in the regulation of responses to T-cell activation stimuli, specifically proliferation and lymphokine production. Interactions with ITK and TXK may provide important biochemical links of these two important kinases with other components in the T-cell activation machinery. This Mus musculus (Mouse) protein is SH2 domain-containing protein 2A (Sh2d2a).